The primary structure comprises 127 residues: Methylglyoxal synthase (127 aa).

Residues 1-127 (MEKKIALIAH…IKGLESLILR (127 aa)) form the MGS-like domain. Substrate-binding positions include His10, Lys14, 36–39 (TGTT), and 56–57 (SG). Residue Asp62 is the Proton donor/acceptor of the active site. A substrate-binding site is contributed by His89.

It belongs to the methylglyoxal synthase family.

It catalyses the reaction dihydroxyacetone phosphate = methylglyoxal + phosphate. In terms of biological role, catalyzes the formation of methylglyoxal from dihydroxyacetone phosphate. The chain is Methylglyoxal synthase from Borreliella afzelii (strain PKo) (Borrelia afzelii).